The following is a 150-amino-acid chain: Large ribosomal subunit protein bL9 (150 aa).

Belongs to the bacterial ribosomal protein bL9 family.

Functionally, binds to the 23S rRNA. The polypeptide is Large ribosomal subunit protein bL9 (Burkholderia thailandensis (strain ATCC 700388 / DSM 13276 / CCUG 48851 / CIP 106301 / E264)).